A 309-amino-acid polypeptide reads, in one-letter code: tRNA pseudouridine synthase B (309 aa).

Residue Asp40 is the Nucleophile of the active site.

The protein belongs to the pseudouridine synthase TruB family. Type 1 subfamily.

The enzyme catalyses uridine(55) in tRNA = pseudouridine(55) in tRNA. Functionally, responsible for synthesis of pseudouridine from uracil-55 in the psi GC loop of transfer RNAs. The chain is tRNA pseudouridine synthase B from Mycobacterium avium (strain 104).